A 201-amino-acid chain; its full sequence is MSSLEDRDPYALFAEWLEEAGTTEPNDPNAMALATCTPEGRPSLRMVLLKGVIAQADAEGGFIFYTNLESRKGGELLANPHAALCFHWKSLRRQVRVEGPVVAVSDAEADAYFASRHRDSRIGAWASMQSRPLQGRFELERRVAQFAARYAVGAVPRPPHWSGFRVVPEVIEFWHDRPFRLHDRVVYRSEGSGWTHSRLYP.

Residues 45-50 (RMVLLK), 65-66 (YT), Arg-71, Lys-72, and Gln-94 contribute to the FMN site. A substrate-binding site is contributed by Lys-50. Residues Tyr-112, Arg-116, and Ser-120 each coordinate substrate. FMN-binding positions include 129–130 (QS) and Trp-174. 180 to 182 (RLH) contributes to the substrate binding site. Arg-184 contacts FMN.

This sequence belongs to the pyridoxamine 5'-phosphate oxidase family. Homodimer. The cofactor is FMN.

The catalysed reaction is pyridoxamine 5'-phosphate + O2 + H2O = pyridoxal 5'-phosphate + H2O2 + NH4(+). It carries out the reaction pyridoxine 5'-phosphate + O2 = pyridoxal 5'-phosphate + H2O2. It functions in the pathway cofactor metabolism; pyridoxal 5'-phosphate salvage; pyridoxal 5'-phosphate from pyridoxamine 5'-phosphate: step 1/1. The protein operates within cofactor metabolism; pyridoxal 5'-phosphate salvage; pyridoxal 5'-phosphate from pyridoxine 5'-phosphate: step 1/1. Its function is as follows. Catalyzes the oxidation of either pyridoxine 5'-phosphate (PNP) or pyridoxamine 5'-phosphate (PMP) into pyridoxal 5'-phosphate (PLP). This Rhodospirillum rubrum (strain ATCC 11170 / ATH 1.1.1 / DSM 467 / LMG 4362 / NCIMB 8255 / S1) protein is Pyridoxine/pyridoxamine 5'-phosphate oxidase.